Consider the following 386-residue polypeptide: MSVIKMTDLDLAGKRVFIRADLNVPVKDGKVTSDARIIASLPTIKHCLEAGAKVMVTSHLGRPTEGEYAEEFSLQPVVNYLNDALDCEVKLAKDYLNGLELNAGELVVLENVRFNKGEKKNEEELSKQYASLCDIFVMDAFGTAHRAQASTHGVGMHADVACAGPLLANELEALGKAMDKPARPMVAIVGGSKVSTKLTVLESLSKIADQLVVGGGIANTFIAAAGHNVGKSLYEADLVETAKKLMDECAIPVATDVACAKAFDENAEAEIKHVSEVQDDDMIFDLGPDSTAELAEILKNAKTILWNGPVGVFEFKNFEAGTKGISEAIAASEGFSVAGGGDTLAAIDKFGIKADVSYISTGGGAFLEFVEGKVLPAVEMLEARAK.

Substrate contacts are provided by residues 21 to 23 (DLN), R36, 59 to 62 (HLGR), R113, and R146. ATP contacts are provided by residues K197, E314, and 340 to 343 (GGDT).

This sequence belongs to the phosphoglycerate kinase family. In terms of assembly, monomer.

Its subcellular location is the cytoplasm. It carries out the reaction (2R)-3-phosphoglycerate + ATP = (2R)-3-phospho-glyceroyl phosphate + ADP. It functions in the pathway carbohydrate degradation; glycolysis; pyruvate from D-glyceraldehyde 3-phosphate: step 2/5. In Vibrio campbellii (strain ATCC BAA-1116), this protein is Phosphoglycerate kinase.